Here is a 23-residue protein sequence, read N- to C-terminus: uncharacterized protein (23 aa).

It is found in the plastid. It localises to the chloroplast. This is an uncharacterized protein from Zea mays (Maize).